Consider the following 152-residue polypeptide: Large ribosomal subunit protein bL9 (152 aa).

The protein belongs to the bacterial ribosomal protein bL9 family.

Functionally, binds to the 23S rRNA. The polypeptide is Large ribosomal subunit protein bL9 (Corynebacterium urealyticum (strain ATCC 43042 / DSM 7109)).